The primary structure comprises 428 residues: Gamma-glutamyl phosphate reductase (428 aa).

Belongs to the gamma-glutamyl phosphate reductase family.

It is found in the cytoplasm. The enzyme catalyses L-glutamate 5-semialdehyde + phosphate + NADP(+) = L-glutamyl 5-phosphate + NADPH + H(+). It participates in amino-acid biosynthesis; L-proline biosynthesis; L-glutamate 5-semialdehyde from L-glutamate: step 2/2. Functionally, catalyzes the NADPH-dependent reduction of L-glutamate 5-phosphate into L-glutamate 5-semialdehyde and phosphate. The product spontaneously undergoes cyclization to form 1-pyrroline-5-carboxylate. The protein is Gamma-glutamyl phosphate reductase of Afipia carboxidovorans (strain ATCC 49405 / DSM 1227 / KCTC 32145 / OM5) (Oligotropha carboxidovorans).